A 452-amino-acid polypeptide reads, in one-letter code: UDP-N-acetylmuramoylalanine--D-glutamate ligase (452 aa).

115–121 contacts ATP; the sequence is GTNGKTT.

The protein belongs to the MurCDEF family.

It is found in the cytoplasm. It catalyses the reaction UDP-N-acetyl-alpha-D-muramoyl-L-alanine + D-glutamate + ATP = UDP-N-acetyl-alpha-D-muramoyl-L-alanyl-D-glutamate + ADP + phosphate + H(+). Its pathway is cell wall biogenesis; peptidoglycan biosynthesis. In terms of biological role, cell wall formation. Catalyzes the addition of glutamate to the nucleotide precursor UDP-N-acetylmuramoyl-L-alanine (UMA). This chain is UDP-N-acetylmuramoylalanine--D-glutamate ligase, found in Geobacter metallireducens (strain ATCC 53774 / DSM 7210 / GS-15).